The primary structure comprises 248 residues: Probable 2-oxo-3-(5-oxofuran-2-ylidene)propanoate lactonase (248 aa).

Active-site residues include C123, D180, and H212.

It belongs to the dienelactone hydrolase family.

The enzyme catalyses 2-oxo-3-(5-oxofuran-2-ylidene)propanoate + H2O = 3-maleylpyruvate + H(+). Involved in the 5-nitroanthranilic acid (5NAA) degradation. Catalyzes the hydrolysis of the lactone to produce maleylpyruvate biodegradation of 5-nitroanthranilate. This chain is Probable 2-oxo-3-(5-oxofuran-2-ylidene)propanoate lactonase (naaC), found in Bradyrhizobium sp.